The chain runs to 301 residues: MLTSGLTNAPITKLLLIYTIASSIALSILDIKHLASIHVSPHLWPYAQFWRLATWQLAGFTNSTEALFAAMLAYHLRVVERAWGKRKFATFIISTLPYTSLLPPLLLVLLRPLTLYKLNYLPCGPTATLFALLAQYHAGIPHTFRYRISTSTSTSTSSANRDTDASGRGEGAQGKHLTLLLSDKSTTYLVAAQLALSQFPGMMLPAAVGWVVGVAWRAEVLPVPSARWRVPAWAVGEKEMGRRGTQGGEGGERYEDLRRRLEGEAVAAAAAASGNAGSASEASGQRQRRREGGIMDRLRAL.

3 helical membrane-spanning segments follow: residues 9-29, 52-72, and 90-110; these read APIT…LSIL, LATW…AAML, and TFII…LVLL. Positions 268–284 are enriched in low complexity; it reads AAAAASGNAGSASEASG. The segment at 268 to 301 is disordered; that stretch reads AAAAASGNAGSASEASGQRQRRREGGIMDRLRAL. The span at 290–301 shows a compositional bias: basic and acidic residues; that stretch reads REGGIMDRLRAL.

As to quaternary structure, component of the DSC E3 ubiquitin ligase complex composed of dscA, dscB, dscC and dscD.

The protein localises to the endoplasmic reticulum membrane. The enzyme catalyses S-ubiquitinyl-[E2 ubiquitin-conjugating enzyme]-L-cysteine + [acceptor protein]-L-lysine = [E2 ubiquitin-conjugating enzyme]-L-cysteine + N(6)-ubiquitinyl-[acceptor protein]-L-lysine.. The protein operates within protein modification; protein ubiquitination. Functionally, component of the DSC E3 ubiquitin ligase complex which is required for the srbA transcriptional activator proteolytic cleavage to release the soluble transcription factor from the membrane in low oxygen or sterol conditions. Required for growth during hypoxia and triazole drug susceptibility, as well as for virulence in a murine model of invasive pulmonary aspergillosis (IPA). This is DSC E3 ubiquitin ligase complex subunit B from Aspergillus fumigatus (strain ATCC MYA-4609 / CBS 101355 / FGSC A1100 / Af293) (Neosartorya fumigata).